Consider the following 946-residue polypeptide: Bifunctional glutamine synthetase adenylyltransferase/adenylyl-removing enzyme (946 aa).

An adenylyl removase region spans residues 1–440; sequence MKPLSSPLQQ…VFNELIGDDE (440 aa). Residues 449–946 are adenylyl transferase; the sequence is SEQWRELWQD…ASWQKWLVEE (498 aa).

The protein belongs to the GlnE family. Mg(2+) serves as cofactor.

It catalyses the reaction [glutamine synthetase]-O(4)-(5'-adenylyl)-L-tyrosine + phosphate = [glutamine synthetase]-L-tyrosine + ADP. The catalysed reaction is [glutamine synthetase]-L-tyrosine + ATP = [glutamine synthetase]-O(4)-(5'-adenylyl)-L-tyrosine + diphosphate. Functionally, involved in the regulation of glutamine synthetase GlnA, a key enzyme in the process to assimilate ammonia. When cellular nitrogen levels are high, the C-terminal adenylyl transferase (AT) inactivates GlnA by covalent transfer of an adenylyl group from ATP to specific tyrosine residue of GlnA, thus reducing its activity. Conversely, when nitrogen levels are low, the N-terminal adenylyl removase (AR) activates GlnA by removing the adenylyl group by phosphorolysis, increasing its activity. The regulatory region of GlnE binds the signal transduction protein PII (GlnB) which indicates the nitrogen status of the cell. This Escherichia coli O8 (strain IAI1) protein is Bifunctional glutamine synthetase adenylyltransferase/adenylyl-removing enzyme.